A 361-amino-acid polypeptide reads, in one-letter code: Phospho-N-acetylmuramoyl-pentapeptide-transferase (361 aa).

The next 10 membrane-spanning stretches (helical) occupy residues 27 to 47, 70 to 90, 97 to 117, 134 to 154, 167 to 187, 199 to 219, 236 to 256, 263 to 283, 288 to 308, and 338 to 358; these read ILASLTALIVGLLCGPLMIRW, GTPTMGGVLILLAITVSCLLW, SLWLVLLVTLANGLVGWVDDY, YFWQSVIALVAVSYLYWNASL, TVTWDLGIFFPVLAYFVIVGS, GLAIMPIVMVAGALGVFAYAS, TGELTIFCSSIVGAGLGFLWY, VFMGDVGSLALGAALGIVAVV, LVLLIMGGLFVIETLSVILQV, and KVIVRFWIITVVFVLCGLATL.

The protein belongs to the glycosyltransferase 4 family. MraY subfamily. Mg(2+) serves as cofactor.

It is found in the cell inner membrane. It catalyses the reaction UDP-N-acetyl-alpha-D-muramoyl-L-alanyl-gamma-D-glutamyl-meso-2,6-diaminopimeloyl-D-alanyl-D-alanine + di-trans,octa-cis-undecaprenyl phosphate = di-trans,octa-cis-undecaprenyl diphospho-N-acetyl-alpha-D-muramoyl-L-alanyl-D-glutamyl-meso-2,6-diaminopimeloyl-D-alanyl-D-alanine + UMP. Its pathway is cell wall biogenesis; peptidoglycan biosynthesis. In terms of biological role, catalyzes the initial step of the lipid cycle reactions in the biosynthesis of the cell wall peptidoglycan: transfers peptidoglycan precursor phospho-MurNAc-pentapeptide from UDP-MurNAc-pentapeptide onto the lipid carrier undecaprenyl phosphate, yielding undecaprenyl-pyrophosphoryl-MurNAc-pentapeptide, known as lipid I. In Legionella pneumophila (strain Lens), this protein is Phospho-N-acetylmuramoyl-pentapeptide-transferase.